Reading from the N-terminus, the 911-residue chain is DNA mismatch repair protein MutS (911 aa).

A disordered region spans residues 1–95; that stretch reads MALQGNLFGD…PWSHHSQVTP (95 aa). Over residues 23–42 the composition is skewed to basic and acidic residues; that stretch reads KRQDEPDQLDDHELTQDAKQ. 727 to 734 is an ATP binding site; the sequence is GPNASGKS.

This sequence belongs to the DNA mismatch repair MutS family.

Functionally, this protein is involved in the repair of mismatches in DNA. It is possible that it carries out the mismatch recognition step. This protein has a weak ATPase activity. The chain is DNA mismatch repair protein MutS from Synechococcus sp. (strain CC9311).